The following is a 79-amino-acid chain: UPF0154 protein SAK_1616 (79 aa).

The helical transmembrane segment at 5-25 (IWILLIIVALFGGLVGGIFIA) threads the bilayer.

It belongs to the UPF0154 family.

Its subcellular location is the cell membrane. The chain is UPF0154 protein SAK_1616 from Streptococcus agalactiae serotype Ia (strain ATCC 27591 / A909 / CDC SS700).